Consider the following 481-residue polypeptide: Tetratricopeptide repeat protein 29 (481 aa).

Residues 1-18 (MASVGPVKTKTVTLKELT) are compositionally biased toward low complexity. The tract at residues 1–53 (MASVGPVKTKTVTLKELTPPIPSPEKSACKGAKPDSNHMALVPVKPSQPGSGK) is disordered. TPR repeat units follow at residues 191 to 224 (CERC…AMES), 231 to 264 (QEVR…AMAL), 271 to 310 (VEAN…SQRV), 317 to 350 (ADSL…ARAA), 357 to 390 (KRAS…SEKA), and 397 to 430 (YRAT…ARKL).

As to quaternary structure, interacts with TAX-1.

Its subcellular location is the cytoplasm. It is found in the cytoskeleton. The protein localises to the flagellum axoneme. Axonemal protein which is implicated in axonemal and/or peri-axonemal structure assembly and regulates flagellum assembly and beating. The chain is Tetratricopeptide repeat protein 29 from Trypanosoma brucei brucei (strain 927/4 GUTat10.1).